The following is a 102-amino-acid chain: Small ubiquitin-related modifier 1 (102 aa).

Residues 21–98 (DYIKLKVIGQ…IEVYQEQTGG (78 aa)) enclose the Ubiquitin-like domain. Gly98 participates in a covalent cross-link: Glycyl lysine isopeptide (Gly-Lys) (interchain with K-? in acceptor proteins). A propeptide spanning residues 99–102 (HSTI) is cleaved from the precursor.

The protein belongs to the ubiquitin family. SUMO subfamily. Interacts with sae2, ube2i, ranbp2, pias1 and pias2. Interacts with sox9 and sox10. Covalently attached to a number of proteins. In terms of processing, cleavage of precursor form by a sentrin-specific protease is necessary for function.

The protein localises to the nucleus membrane. It localises to the nucleus speckle. Its subcellular location is the cytoplasm. The protein resides in the nucleus. It is found in the PML body. The protein localises to the cell membrane. Functionally, ubiquitin-like protein that can be covalently attached to proteins as a monomer or a lysine-linked polymer. Covalent attachment via an isopeptide bond to its substrates requires prior activation by the E1 complex sae1-sae2 and linkage to the E2 enzyme ube2i. This post-translational modification on lysine residues of proteins plays a crucial role in a number of cellular processes such as nuclear transport, DNA replication and repair, mitosis and signal transduction. Polymeric sumo1 chains are also susceptible to polyubiquitination which functions as a signal for proteasomal degradation of modified proteins. This chain is Small ubiquitin-related modifier 1 (sumo1), found in Xenopus tropicalis (Western clawed frog).